Consider the following 321-residue polypeptide: Probable heme-iron transport system permease protein IsdF (321 aa).

A run of 9 helical transmembrane segments spans residues 9-29, 61-81, 89-109, 114-134, 143-163, 179-199, 233-253, 267-287, and 294-314; these read LLFL…FVTG, ILIA…LQAA, ANII…MLFI, FYLP…IILL, VSMI…LEIL, IWSD…LTLL, VFLA…GIIV, LIPF…LLGR, and EIPA…YLIC.

The protein belongs to the binding-protein-dependent transport system permease family. FecCD subfamily.

The protein resides in the cell membrane. In terms of biological role, part of the binding-protein-dependent transport system for heme-iron. Responsible for the translocation of the substrate across the membrane. The polypeptide is Probable heme-iron transport system permease protein IsdF (isdF) (Staphylococcus aureus (strain NCTC 8325 / PS 47)).